We begin with the raw amino-acid sequence, 213 residues long: uncharacterized protein (213 aa).

Coiled coils occupy residues 54-78 (KEQT…NLKL) and 108-151 (VKDV…STSK). Basic and acidic residues predominate over residues 122 to 142 (IEKEKEEEKAAKKAEKAEEKK). Residues 122 to 213 (IEKEKEEEKA…FGGKPTGQIW (92 aa)) form a disordered region. Over residues 146-188 (KNSTSKSGSKSSKSSSGSSKSSSKSSKSSKSSSGSSKSSSKSS) the composition is skewed to low complexity. Residues 189–199 (KNSKKSSKKSN) show a composition bias toward basic residues.

This sequence belongs to the mimivirus R546 family.

This is an uncharacterized protein from Acanthamoeba polyphaga (Amoeba).